Here is an 862-residue protein sequence, read N- to C-terminus: Valine--tRNA ligase (862 aa).

Positions 44-53 (NVTGSLHMGH) match the 'HIGH' region motif. Positions 176, 179, 344, 347, 417, 420, 438, and 441 each coordinate Zn(2+). A 'KMSKS' region motif is present at residues 528-532 (KMSKS). K531 contributes to the ATP binding site. Residues 802 to 862 (RRRQEKRLKE…RIREALSQIG (61 aa)) adopt a coiled-coil conformation.

The protein belongs to the class-I aminoacyl-tRNA synthetase family. ValS type 1 subfamily. As to quaternary structure, monomer. Zn(2+) serves as cofactor.

It localises to the cytoplasm. It carries out the reaction tRNA(Val) + L-valine + ATP = L-valyl-tRNA(Val) + AMP + diphosphate. Functionally, catalyzes the attachment of valine to tRNA(Val). As ValRS can inadvertently accommodate and process structurally similar amino acids such as threonine, to avoid such errors, it has a 'posttransfer' editing activity that hydrolyzes mischarged Thr-tRNA(Val) in a tRNA-dependent manner. The protein is Valine--tRNA ligase of Thermus thermophilus (strain ATCC 27634 / DSM 579 / HB8).